The chain runs to 337 residues: NADH-quinone oxidoreductase subunit H (337 aa).

Helical transmembrane passes span 9–29 (FAKI…FTYV), 77–97 (FLIA…VIPF), 110–130 (LLYI…AGWA), 154–174 (MGFA…SGIV), 181–201 (FWEW…ISGV), 229–249 (MAFA…SFLA), 274–294 (VPGI…YLWF), and 313–333 (VLIP…YGGV).

Belongs to the complex I subunit 1 family. As to quaternary structure, NDH-1 is composed of 14 different subunits. Subunits NuoA, H, J, K, L, M, N constitute the membrane sector of the complex.

The protein localises to the cell inner membrane. The enzyme catalyses a quinone + NADH + 5 H(+)(in) = a quinol + NAD(+) + 4 H(+)(out). Its function is as follows. NDH-1 shuttles electrons from NADH, via FMN and iron-sulfur (Fe-S) centers, to quinones in the respiratory chain. The immediate electron acceptor for the enzyme in this species is believed to be ubiquinone. Couples the redox reaction to proton translocation (for every two electrons transferred, four hydrogen ions are translocated across the cytoplasmic membrane), and thus conserves the redox energy in a proton gradient. This subunit may bind ubiquinone. In Halorhodospira halophila (strain DSM 244 / SL1) (Ectothiorhodospira halophila (strain DSM 244 / SL1)), this protein is NADH-quinone oxidoreductase subunit H.